Here is a 240-residue protein sequence, read N- to C-terminus: Tetrahydromethanopterin S-methyltransferase subunit A (240 aa).

Residues 1–218 (MADKKEPAPG…KFHSGVHAGK (218 aa)) are Cytoplasmic-facing. His85 contacts 5-hydroxybenzimidazolylcob(I)amide. The helical transmembrane segment at 219–239 (IEGAMIGLTVTISLLGLLLLG) threads the bilayer. Position 240 (Arg240) is a topological domain, extracellular.

The protein belongs to the MtrA family. In terms of assembly, the complex is composed of 8 subunits; MtrA, MtrB, MtrC, MtrD, MtrE, MtrF, MtrG and MtrH. 5-hydroxybenzimidazolylcob(I)amide serves as cofactor.

It localises to the cell membrane. It catalyses the reaction 5-methyl-5,6,7,8-tetrahydromethanopterin + coenzyme M + 2 Na(+)(in) = 5,6,7,8-tetrahydromethanopterin + methyl-coenzyme M + 2 Na(+)(out). Its pathway is one-carbon metabolism; methanogenesis from CO(2); methyl-coenzyme M from 5,10-methylene-5,6,7,8-tetrahydromethanopterin: step 2/2. In terms of biological role, part of a complex that catalyzes the formation of methyl-coenzyme M and tetrahydromethanopterin from coenzyme M and methyl-tetrahydromethanopterin. This is an energy-conserving, sodium-ion translocating step. This is Tetrahydromethanopterin S-methyltransferase subunit A from Methanosarcina barkeri (strain Fusaro / DSM 804).